The following is a 560-amino-acid chain: Proteasome-associated ATPase (560 aa).

Basic and acidic residues predominate over residues M1–A19. Positions M1–Q21 are disordered. A coiled-coil region spans residues R16–K55. Residue G237–L242 coordinates ATP. Residues Y559–L560 are docks into pockets in the proteasome alpha-ring.

It belongs to the AAA ATPase family. As to quaternary structure, homohexamer. Assembles into a hexameric ring structure that caps the 20S proteasome core. Strongly interacts with the prokaryotic ubiquitin-like protein Pup through a hydrophobic interface; the interacting region of ARC lies in its N-terminal coiled-coil domain. There is one Pup binding site per ARC hexamer ring. Upon ATP-binding, the C-terminus of ARC interacts with the alpha-rings of the proteasome core, possibly by binding to the intersubunit pockets.

Its pathway is protein degradation; proteasomal Pup-dependent pathway. Its function is as follows. ATPase which is responsible for recognizing, binding, unfolding and translocation of pupylated proteins into the bacterial 20S proteasome core particle. May be essential for opening the gate of the 20S proteasome via an interaction with its C-terminus, thereby allowing substrate entry and access to the site of proteolysis. Thus, the C-termini of the proteasomal ATPase may function like a 'key in a lock' to induce gate opening and therefore regulate proteolysis. The sequence is that of Proteasome-associated ATPase from Beutenbergia cavernae (strain ATCC BAA-8 / DSM 12333 / CCUG 43141 / JCM 11478 / NBRC 16432 / NCIMB 13614 / HKI 0122).